A 150-amino-acid polypeptide reads, in one-letter code: Ventricular natriuretic peptide (150 aa).

Positions 1–21 are cleaved as a signal peptide; it reads MAKSGIYLGCFILILIQNMVA. The tract at residues 52-75 is disordered; the sequence is EEPEVYPESEDMKMDAEEEDAGIS. Cysteine 120 and cysteine 136 are oxidised to a cystine.

It belongs to the natriuretic peptide family. In terms of tissue distribution, heart ventricle, and to a lower extent in heart atrium.

It localises to the secreted. Its function is as follows. Exhibits natriuretic and vasodepressor activity. The protein is Ventricular natriuretic peptide (vnp) of Anguilla japonica (Japanese eel).